A 301-amino-acid polypeptide reads, in one-letter code: Quinolinate synthase (301 aa).

Residues H21 and S38 each coordinate iminosuccinate. Residue C83 participates in [4Fe-4S] cluster binding. Residues 109-111 (YIN) and S126 contribute to the iminosuccinate site. C169 serves as a coordination point for [4Fe-4S] cluster. Residues 195–197 (HPE) and T212 each bind iminosuccinate. A [4Fe-4S] cluster-binding site is contributed by C257.

Belongs to the quinolinate synthase family. Type 2 subfamily. Requires [4Fe-4S] cluster as cofactor.

It localises to the cytoplasm. It catalyses the reaction iminosuccinate + dihydroxyacetone phosphate = quinolinate + phosphate + 2 H2O + H(+). The protein operates within cofactor biosynthesis; NAD(+) biosynthesis; quinolinate from iminoaspartate: step 1/1. In terms of biological role, catalyzes the condensation of iminoaspartate with dihydroxyacetone phosphate to form quinolinate. The polypeptide is Quinolinate synthase (Clostridium perfringens (strain SM101 / Type A)).